We begin with the raw amino-acid sequence, 665 residues long: METPSQRRATRSGAQASSTPLSPTRITRLQEKEDLQELNDRLAVYIDRVRSLETENAGLRLRITESEEVVSREVSGIKAAYEAELGDARKTLDSVAKERARLQLELSKVREEFKELKARNTKKEGDLLAAQARLKDLEALLNSKEAALSTALSEKRTLEGELHDLRGQVAKLEAALGEAKKQLQDEMLRRVDAENRLQTLKEELDFQKNIYSEELRETKRRHETRLVEIDNGKQREFESRLADALQELRAQHEDQVEQYKKELEKTYSAKLDNARQSAERNSNLVGAAHEELQQSRIRIDSLSAQLSQLQKQLAAKEAKLRDLEDSLARERDTSRRLLAEKEREMAEMRARMQQQLDEYQELLDIKLALDMEIHAYRKLLEGEEERLRLSPSPTSQRSRGRASSHSSQSQGGGSVTKKRKLESSESRSSFSQHARTSGRVAVEEVDEEGKFVRLRNKSNEDQSMGNWQIRRQNGDDPLMTYRFPPKFTLKAGQVVTIWASGAGATHSPPTDLVWKAQNTWGCGSSLRTALINSTGEEVAMRKLVRSLTMVEDNEDDDEDGEELLHHHRGSHCSGSGDPAEYNLRSRTVLCGTCGQPADKAAGGAGAQVGGSISSGSSASSVTVTRSFRSVGGSGGGSFGDNLVTRSYLLGNSSPRSQSSQNCSIM.

Methionine 1 carries the post-translational modification N-acetylmethionine. A disordered region spans residues 1–25 (METPSQRRATRSGAQASSTPLSPTR). The head stretch occupies residues 1–33 (METPSQRRATRSGAQASSTPLSPTRITRLQEKE). An interaction with MLIP region spans residues 1-130 (METPSQRRAT…TKKEGDLLAA (130 aa)). Threonine 3 is subject to Phosphothreonine. Position 5 is a phosphoserine (serine 5). At threonine 10 the chain carries Phosphothreonine. Residues serine 12 and serine 18 each carry the phosphoserine modification. Threonine 19 carries the post-translational modification Phosphothreonine. Serine 22 is subject to Phosphoserine. An IF rod domain is found at 31–387 (EKEDLQELND…KLLEGEEERL (357 aa)). N6-acetyllysine; alternate is present on lysine 32. Lysine 32 bears the N6-succinyllysine; alternate mark. Lysine 32 participates in a covalent cross-link: Glycyl lysine isopeptide (Lys-Gly) (interchain with G-Cter in SUMO2); alternate. Residues 34–70 (DLQELNDRLAVYIDRVRSLETENAGLRLRITESEEVV) are coil 1A. Phosphoserine is present on residues serine 51, serine 66, and serine 71. A linker 1 region spans residues 71-80 (SREVSGIKAA). An N6-acetyllysine mark is found at lysine 78 and lysine 97. The coil 1B stretch occupies residues 81–218 (YEAELGDARK…NIYSEELRET (138 aa)). A Glycyl lysine isopeptide (Lys-Gly) (interchain with G-Cter in SUMO2) cross-link involves residue lysine 97. Serine 107 carries the phosphoserine modification. N6-acetyllysine occurs at positions 108, 114, 123, 135, 144, and 155. Lysine 171 is subject to N6-acetyllysine; alternate. N6-succinyllysine; alternate is present on lysine 171. Lysine 171 participates in a covalent cross-link: Glycyl lysine isopeptide (Lys-Gly) (interchain with G-Cter in SUMO2); alternate. N6-acetyllysine is present on residues lysine 180, lysine 201, and lysine 208. Lysine 201 participates in a covalent cross-link: Glycyl lysine isopeptide (Lys-Gly) (interchain with G-Cter in SUMO2); alternate. Residue lysine 201 forms a Glycyl lysine isopeptide (Lys-Gly) (interchain with G-Cter in SUMO); alternate linkage. Residue lysine 208 forms a Glycyl lysine isopeptide (Lys-Gly) (interchain with G-Cter in SUMO2) linkage. The residue at position 212 (serine 212) is a Phosphoserine. Glycyl lysine isopeptide (Lys-Gly) (interchain with G-Cter in SUMO2) cross-links involve residues lysine 219 and lysine 233. The tract at residues 219-242 (KRRHETRLVEIDNGKQREFESRLA) is linker 2. Residues lysine 233, lysine 260, lysine 265, and lysine 270 each carry the N6-acetyllysine modification. Residues 243 to 383 (DALQELRAQH…HAYRKLLEGE (141 aa)) form a coil 2 region. Lysine 260 is covalently cross-linked (Glycyl lysine isopeptide (Lys-Gly) (interchain with G-Cter in SUMO2); alternate). Residue lysine 270 forms a Glycyl lysine isopeptide (Lys-Gly) (interchain with G-Cter in SUMO2); alternate linkage. Serine 277, serine 282, serine 301, and serine 307 each carry phosphoserine. Residue lysine 311 forms a Glycyl lysine isopeptide (Lys-Gly) (interchain with G-Cter in SUMO2); alternate linkage. Lysine 311, lysine 316, and lysine 341 each carry N6-acetyllysine. Glycyl lysine isopeptide (Lys-Gly) (interchain with G-Cter in SUMO2) cross-links involve residues lysine 366 and lysine 378. Residues 384–442 (EERLRLSPSPTSQRSRGRASSHSSQSQGGGSVTKKRKLESSESRSSFSQHARTSGRVAV) form a disordered region. Residues 384–665 (EERLRLSPSP…SQSSQNCSIM (282 aa)) form a tail region. 10 positions are modified to phosphoserine: serine 390, serine 392, serine 395, serine 398, serine 403, serine 404, serine 406, serine 407, serine 409, and serine 414. Serine 392 bears the Phosphoserine; by CDK1 mark. A compositionally biased stretch (low complexity) spans 395–409 (SQRSRGRASSHSSQS). Position 416 is a phosphothreonine (threonine 416). Lysine 417 and lysine 420 each carry N6-acetyllysine. Residues lysine 417 and lysine 420 each participate in a glycyl lysine isopeptide (Lys-Gly) (interchain with G-Cter in SUMO2) cross-link. The short motif at 417–422 (KKRKLE) is the Nuclear localization signal element. Phosphoserine occurs at positions 423, 426, 429, and 431. Residues 428-545 (SSFSQHARTS…EEVAMRKLVR (118 aa)) form the LTD domain. Lysine 450 is covalently cross-linked (Glycyl lysine isopeptide (Lys-Gly) (interchain with G-Cter in SUMO2); alternate). Residues lysine 450 and lysine 457 each carry the N6-acetyllysine modification. Phosphoserine occurs at positions 458, 460, and 463. Lysine 486 bears the N6-acetyllysine mark. A Glycyl lysine isopeptide (Lys-Gly) (interchain with G-Cter in SUMO2) cross-link involves residue lysine 486. Position 496 is a phosphothreonine (threonine 496). At serine 500 the chain carries Phosphoserine. Phosphothreonine occurs at positions 505 and 510. A phosphoserine mark is found at serine 533 and serine 546. At threonine 548 the chain carries Phosphothreonine. The tract at residues 553 to 577 (NEDDDEDGEELLHHHRGSHCSGSGD) is disordered. Phosphoserine is present on residues serine 570, cysteine 572, and serine 573. Lysine 599 is covalently cross-linked (Glycyl lysine isopeptide (Lys-Gly) (interchain with G-Cter in SUMO2); alternate). Lysine 599 participates in a covalent cross-link: Glycyl lysine isopeptide (Lys-Gly) (interchain with G-Cter in SUMO1); alternate. Phosphoserine is present on residues serine 613, serine 614, serine 617, and serine 620. O-linked (GlcNAc) serine glycosylation is found at serine 626 and serine 629. Serine 629, serine 633, serine 637, and serine 653 each carry phosphoserine. The propeptide at 648–662 (LLGNSSPRSQSSQNC) is removed in Lamin-A/C form. The residue at position 662 (cysteine 662) is a Cysteine methyl ester. A lipid anchor (S-farnesyl cysteine) is attached at cysteine 662. A propeptide spans 663 to 665 (SIM) (removed in Prelamin-A/C form and in Lamin-A/C form).

This sequence belongs to the intermediate filament family. In terms of assembly, homodimer of lamin A and lamin C. Lamin dimers then assemble into dimeric head-to-tail polymers. Ultimately, two head-to-tail polymers assemble laterally into a protofilament with a uniformly shaped rod of 3.5 nm in diameter. Interacts with lamin-associated polypeptides IA, IB and TMPO-alpha, RB1 and with emerin. Proteolytically processed isoform A interacts with NARF. Interacts with SREBF1, SREBF2, SUN1, SUN2 and TMEM43. Interacts with TMEM201. Prelamin-A/C interacts with EMD. Interacts with DMPK; may regulate nuclear envelope stability. Interacts with MLIP. Interacts with SUV39H1; the interaction increases stability of SUV39H1. Interacts with ITSN1 isoform 2. Interacts with IFFO1; the interaction forms an interior nucleoskeleton and the recruitment to DNA double-strand breaks. As to quaternary structure, interacts with EMD. Interacts (via C-terminus) with LEMD2 (via N-terminus) (in vitro). In terms of processing, proteolytic cleavage of the C-terminal of 18 residues of prelamin-A/C results in the production of lamin-A/C. The prelamin-A/C maturation pathway includes farnesylation of CAAX motif by protein farnesyltransferase (FNTA and FNTB), removal of the last three amino acids (-AAX) by RCE1/FACE2 and/or ZMPSTE24, methylation of the C-terminal cysteine by ICMT and endoproteolytic removal of the last 15 C-terminal amino acids by ZMPSTE24. Proteolytic cleavage requires prior farnesylation and methylation, and absence of these blocks cleavage. Farnesylation of prelamin-A/C facilitates nuclear envelope targeting. Post-translationally, phosphorylation plays a key role in lamin organization, subcellular localization and nuclear envelope disintegration. Phosphorylation by CDK1 at Ser-22 and Ser-392 at the onset of mitosis drives lamin disassembly and nuclear envelope breakdown. Phosphorylation at Ser-22 and Ser-392 during interphase promotes localization to the nucleoplasm and regulates lamina assembly. Phosphorylation at Ser-22, Ser-392 and Ser-629 during interphase causes redistribution between the nucleus and the cytoplasm. Phosphorylation at Ser-22 by CDK1 regulates matrix stiffness. Phosphorylation status of Ser-22 determines its localization between double-strand break (DSB) sites and the nuclear matrix. Phosphorylated by ATR at Ser-282 in response to DNA damage, leading to lamin disassembly and nuclear envelope rupture. Phosphorylation also regulates stability in micronuclei arising from genome instability: phosphorylation at Ser-395 by ATR in response to genome instability and double-stranded DNA breaks primes LMNA for subsequent phosphorylation at Ser-392 by CDK1 and micronuclei envelope rupture. The rupture of micronuclear envelope triggers the cGAS-STING pathway thereby activating the type I interferon response and innate immunity. In terms of processing, isoform C is phosphorylated on Ser-392, Ser-407 and Ser-409 at interphase. Acetylation by KAT8 is required for nuclear architecture. Post-translationally, sumoylation is necessary for the localization to the nuclear envelope. In terms of processing, the N-terminus is blocked. Expressed in liver and in bone marrow (at protein level). Expressed in cardiomyocytes. As to expression, specifically expressed in germ cells.

Its subcellular location is the nucleus lamina. The protein localises to the nucleus envelope. It localises to the nucleus. The protein resides in the nucleoplasm. It is found in the nucleus matrix. Functionally, lamins are intermediate filament proteins that assemble into a filamentous meshwork, and which constitute the major components of the nuclear lamina, a fibrous layer on the nucleoplasmic side of the inner nuclear membrane. Lamins provide a framework for the nuclear envelope, bridging the nuclear envelope and chromatin, thereby playing an important role in nuclear assembly, chromatin organization, nuclear membrane and telomere dynamics. Lamin A and C also regulate matrix stiffness by conferring nuclear mechanical properties. The structural integrity of the lamina is strictly controlled by the cell cycle, as seen by the disintegration and formation of the nuclear envelope in prophase and telophase, respectively. Lamin A and C are present in equal amounts in the lamina of mammals. Also invoved in DNA repair: recruited by DNA repair proteins XRCC4 and IFFO1 to the DNA double-strand breaks (DSBs) to prevent chromosome translocation by immobilizing broken DNA ends. Required for normal development of peripheral nervous system and skeletal muscle and for muscle satellite cell proliferation. Required for osteoblastogenesis and bone formation. Also prevents fat infiltration of muscle and bone marrow, helping to maintain the volume and strength of skeletal muscle and bone. Required for cardiac homeostasis. Prelamin-A/C can accelerate smooth muscle cell senescence. It acts to disrupt mitosis and induce DNA damage in vascular smooth muscle cells (VSMCs), leading to mitotic failure, genomic instability, and premature senescence. In terms of biological role, isoform C2 may have a role in determining the organization of nuclear and chromosomal structures during spermatogenesis. In Mus musculus (Mouse), this protein is Prelamin-A/C (Lmna).